The following is a 360-amino-acid chain: Protein Wnt-2 (360 aa).

Residues 1–25 (MNAPLGGIWLGLPLLLTWLSPEVSS) form the signal peptide. Disulfide bonds link Cys76-Cys87, Cys127-Cys135, Cys137-Cys157, Cys206-Cys220, Cys208-Cys215, Cys278-Cys309, Cys294-Cys304, Cys308-Cys348, Cys324-Cys339, Cys326-Cys336, and Cys331-Cys332. A lipid anchor (O-palmitoleoyl serine; by PORCN) is attached at Ser212. N-linked (GlcNAc...) asparagine glycosylation occurs at Asn295.

It belongs to the Wnt family. Palmitoleoylation is required for efficient binding to frizzled receptors. Depalmitoleoylation leads to Wnt signaling pathway inhibition.

Its subcellular location is the secreted. The protein resides in the extracellular space. It is found in the extracellular matrix. Functionally, ligand for members of the frizzled family of seven transmembrane receptors. Probable developmental protein. May be a signaling molecule which affects the development of discrete regions of tissues. Is likely to signal over only few cell diameters. In Oryctolagus cuniculus (Rabbit), this protein is Protein Wnt-2 (WNT2).